The following is a 292-amino-acid chain: tRNA dimethylallyltransferase (292 aa).

Residue 5–12 (APTGAGKT) participates in ATP binding. 7–12 (TGAGKT) contributes to the substrate binding site. The segment at 29–32 (DSRQ) is interaction with substrate tRNA.

Belongs to the IPP transferase family. As to quaternary structure, monomer. Requires Mg(2+) as cofactor.

The enzyme catalyses adenosine(37) in tRNA + dimethylallyl diphosphate = N(6)-dimethylallyladenosine(37) in tRNA + diphosphate. In terms of biological role, catalyzes the transfer of a dimethylallyl group onto the adenine at position 37 in tRNAs that read codons beginning with uridine, leading to the formation of N6-(dimethylallyl)adenosine (i(6)A). The protein is tRNA dimethylallyltransferase of Leptospira borgpetersenii serovar Hardjo-bovis (strain JB197).